A 385-amino-acid polypeptide reads, in one-letter code: Multicilin (385 aa).

The interval 1–130 (MQACGGGAAG…TVDDLISDSS (130 aa)) is necessary and sufficient for its degradation during the cell cycle. Residues 86–111 (SSLLGSDAPPGGDLAASQNHSHQTEA) form a disordered region. A necessary and sufficient for proper nuclear localization region spans residues 131–385 (SMMSPTLASG…GGYKFRWVPS (255 aa)). The tract at residues 173–245 (PDVPPPEQYW…SVLDKLMITQ (73 aa)) is necessary and sufficient for interaction with GMNN and sufficient for homodimerization. Residues 179–227 (EQYWKEVADQNQRALGDALVENNQLHVTLTQKQEEIASLKERNVQLKEL) adopt a coiled-coil conformation. The segment at 294–319 (ALQSRDPKRPRLLPEPANTDTRPGNL) is disordered.

It belongs to the geminin family. Heterodimer (via coiled-coil domain) with GMNN (via coiled-coil domain); targets GMNN to the nucleus. Can form homodimers (in vitro, via coiled-coil domain), but these are much less stable than the heterodimer formed with GMNN.

The protein resides in the nucleus. In terms of biological role, transcription regulator specifically required for multiciliate cell differentiation. Acts in a multiprotein complex containing E2F4 and E2F5 that binds and activates genes required for centriole biogenesis. Required for the deuterosome-mediated acentriolar pathway. Plays a role in mitotic cell cycle progression by promoting cell cycle exit. Modulates GMNN activity by reducing its affinity for CDT1. The sequence is that of Multicilin from Homo sapiens (Human).